We begin with the raw amino-acid sequence, 333 residues long: MKILIKLWTNLINRISNKKYLAAVSGGPDSMAMLNMYKRNIRVVCHVNYHKRESSDRDQQIVVDFCRKNNLIIEILDVDEKVYERYGHIDNFQTKARLIRYDFFKEIGKKYNIENLYIAHNFDDFLETAYMQRARQSKALFYGIKESNVINGIIVKRPVLFVRKQTLQRYCDENKIKYGIDETNELDIYERNRVRKIISSWSLNEVYDFKKFVIKYNKEHSSFANFIDLSYIEFKKNKYKYDYFIRQDDMVQYYLIYYFLIDHKIINPSENKIISLIKFFGKQINKEKAYRVQENIYMHVNDDELISLISYNKSDNISNSNVDIIDDHNVIEK.

25–30 (SGGPDS) serves as a coordination point for ATP.

This sequence belongs to the tRNA(Ile)-lysidine synthase family.

It localises to the cytoplasm. It carries out the reaction cytidine(34) in tRNA(Ile2) + L-lysine + ATP = lysidine(34) in tRNA(Ile2) + AMP + diphosphate + H(+). In terms of biological role, ligates lysine onto the cytidine present at position 34 of the AUA codon-specific tRNA(Ile) that contains the anticodon CAU, in an ATP-dependent manner. Cytidine is converted to lysidine, thus changing the amino acid specificity of the tRNA from methionine to isoleucine. The chain is tRNA(Ile)-lysidine synthase from Ureaplasma parvum serovar 3 (strain ATCC 700970).